The following is a 297-amino-acid chain: Mycothiol acetyltransferase (297 aa).

2 N-acetyltransferase domains span residues 7–156 (VFSD…VTIR) and 153–297 (VTIR…PPPH). Residue Glu-38 participates in 1D-myo-inositol 2-(L-cysteinylamino)-2-deoxy-alpha-D-glucopyranoside binding. 79–81 (VVV) contacts acetyl-CoA. Glu-180, Lys-219, and Glu-227 together coordinate 1D-myo-inositol 2-(L-cysteinylamino)-2-deoxy-alpha-D-glucopyranoside. Residues 231–233 (VGV) and 238–244 (QGLGLGR) contribute to the acetyl-CoA site. Tyr-265 is a 1D-myo-inositol 2-(L-cysteinylamino)-2-deoxy-alpha-D-glucopyranoside binding site. 270–275 (NRPALR) provides a ligand contact to acetyl-CoA.

Belongs to the acetyltransferase family. MshD subfamily. In terms of assembly, monomer.

It carries out the reaction 1D-myo-inositol 2-(L-cysteinylamino)-2-deoxy-alpha-D-glucopyranoside + acetyl-CoA = mycothiol + CoA + H(+). Its function is as follows. Catalyzes the transfer of acetyl from acetyl-CoA to desacetylmycothiol (Cys-GlcN-Ins) to form mycothiol. This Thermomonospora curvata (strain ATCC 19995 / DSM 43183 / JCM 3096 / KCTC 9072 / NBRC 15933 / NCIMB 10081 / Henssen B9) protein is Mycothiol acetyltransferase.